A 157-amino-acid chain; its full sequence is Small ribosomal subunit protein uS7 (157 aa).

It belongs to the universal ribosomal protein uS7 family. In terms of assembly, part of the 30S ribosomal subunit. Contacts proteins S9 and S11.

One of the primary rRNA binding proteins, it binds directly to 16S rRNA where it nucleates assembly of the head domain of the 30S subunit. Is located at the subunit interface close to the decoding center, probably blocks exit of the E-site tRNA. The polypeptide is Small ribosomal subunit protein uS7 (Chloroflexus aurantiacus (strain ATCC 29366 / DSM 635 / J-10-fl)).